Here is a 286-residue protein sequence, read N- to C-terminus: 5-amino-6-(5-phospho-D-ribitylamino)uracil phosphatase YwtE (286 aa).

D7 functions as the Nucleophile in the catalytic mechanism. D7 serves as a coordination point for Mg(2+). L8 contacts phosphate. D9 contacts Mg(2+). Phosphate is bound by residues 41-42 (TG) and K210. Residues D233 and S234 each contribute to the Mg(2+) site. N236 serves as a coordination point for phosphate.

It belongs to the HAD-like hydrolase superfamily. Cof family. Mg(2+) serves as cofactor.

It carries out the reaction 5-amino-6-(5-phospho-D-ribitylamino)uracil + H2O = 5-amino-6-(D-ribitylamino)uracil + phosphate. The protein operates within cofactor biosynthesis; riboflavin biosynthesis; 5-amino-6-(D-ribitylamino)uracil from GTP: step 4/4. Its function is as follows. Catalyzes the dephosphorylation of the riboflavin precursor 5-amino-6-(5-phospho-D-ribitylamino)uracil and of flavin mononucleotide (FMN) in vitro. Also catalyzes the dephosphorylation of phosphorylated 5-6 carbon sugars and monophosphate nucleotides (NMP) in vitro. The chain is 5-amino-6-(5-phospho-D-ribitylamino)uracil phosphatase YwtE (ywtE) from Bacillus subtilis (strain 168).